Consider the following 360-residue polypeptide: Probable neutral protease 2 homolog MCYG_04257 (360 aa).

The signal sequence occupies residues 1-17 (MQLIAFLAALGVPVAFA). Positions 18-182 (ATIPSVPLNH…KVKAGSIDKR (165 aa)) are excised as a propeptide. Cysteines 190 and 261 form a disulfide. Asparagine 262 carries an N-linked (GlcNAc...) asparagine glycan. 2 disulfide bridges follow: cysteine 268-cysteine 286 and cysteine 300-cysteine 360. Histidine 311 lines the Zn(2+) pocket. Glutamate 312 is a catalytic residue. Zn(2+) is bound by residues histidine 315 and aspartate 326.

This sequence belongs to the peptidase M35 family. It depends on Zn(2+) as a cofactor.

The protein localises to the secreted. It carries out the reaction Preferential cleavage of bonds with hydrophobic residues in P1'. Also 3-Asn-|-Gln-4 and 8-Gly-|-Ser-9 bonds in insulin B chain.. Functionally, probable secreted metalloprotease that shows high activities on basic nuclear substrates such as histone and protamine. May be involved in virulence. This is Probable neutral protease 2 homolog MCYG_04257 from Arthroderma otae (strain ATCC MYA-4605 / CBS 113480) (Microsporum canis).